Here is a 235-residue protein sequence, read N- to C-terminus: Alpha-S2-casein (235 aa).

Positions 1-15 (MKFFIFTCLLAVAFA) are cleaved as a signal peptide. A phosphoserine mark is found at Ser23, Ser24, Ser25, Ser28, Ser47, Ser72, Ser73, Ser74, Ser77, Ser147, Ser149, and Ser168. Polar residues predominate over residues 144-158 (EELSTSEEPVSSSQE). Residues 144-163 (EELSTSEEPVSSSQEENTKT) form a disordered region.

The protein belongs to the alpha-casein family. In terms of tissue distribution, mammary gland specific. Secreted in milk.

The protein resides in the secreted. Important role in the capacity of milk to transport calcium phosphate. In Sus scrofa (Pig), this protein is Alpha-S2-casein (CSN1S2).